A 383-amino-acid polypeptide reads, in one-letter code: Succinyl-diaminopimelate desuccinylase (383 aa).

His-73 provides a ligand contact to Zn(2+). Residue Asp-75 is part of the active site. Asp-107 contributes to the Zn(2+) binding site. Glu-141 functions as the Proton acceptor in the catalytic mechanism. Residues Glu-142, Glu-170, and His-356 each coordinate Zn(2+).

This sequence belongs to the peptidase M20A family. DapE subfamily. As to quaternary structure, homodimer. The cofactor is Zn(2+). Requires Co(2+) as cofactor.

It catalyses the reaction N-succinyl-(2S,6S)-2,6-diaminopimelate + H2O = (2S,6S)-2,6-diaminopimelate + succinate. Its pathway is amino-acid biosynthesis; L-lysine biosynthesis via DAP pathway; LL-2,6-diaminopimelate from (S)-tetrahydrodipicolinate (succinylase route): step 3/3. In terms of biological role, catalyzes the hydrolysis of N-succinyl-L,L-diaminopimelic acid (SDAP), forming succinate and LL-2,6-diaminopimelate (DAP), an intermediate involved in the bacterial biosynthesis of lysine and meso-diaminopimelic acid, an essential component of bacterial cell walls. The sequence is that of Succinyl-diaminopimelate desuccinylase from Pseudomonas entomophila (strain L48).